Reading from the N-terminus, the 424-residue chain is GTPase Obg (424 aa).

In terms of domain architecture, Obg spans 1–158 (MFIDTAKILV…RMINLEIKLL (158 aa)). The 173-residue stretch at 159–331 (ADVGLIGFPN…LIKEVTRQLS (173 aa)) folds into the OBG-type G domain. GTP-binding positions include 165-172 (GFPNVGKS), 190-194 (FTTLK), 212-215 (DIPG), 282-285 (NKID), and 312-314 (SAA). Residues S172 and T192 each contribute to the Mg(2+) site. The region spanning 345-424 (RFMPEEKRFT…LNDFEFDFLL (80 aa)) is the OCT domain.

The protein belongs to the TRAFAC class OBG-HflX-like GTPase superfamily. OBG GTPase family. In terms of assembly, monomer. Mg(2+) is required as a cofactor.

It is found in the cytoplasm. An essential GTPase which binds GTP, GDP and possibly (p)ppGpp with moderate affinity, with high nucleotide exchange rates and a fairly low GTP hydrolysis rate. Plays a role in control of the cell cycle, stress response, ribosome biogenesis and in those bacteria that undergo differentiation, in morphogenesis control. The sequence is that of GTPase Obg from Clostridium novyi (strain NT).